The primary structure comprises 444 residues: MLDINLLRKDLPSAIARLETRKSPQTFLNVEAFQTLEAERKAVQIRTEELQGQRGTLSKQIGQLKSKGEDASAVMALVSHSKAELESSAKRLEQIQTEMQALLLAVPNLPHDSVPQGIGEAGNVEVRKWSPFEGLGGEPAALSFEPRDHVDVGQPLGLDFELGTKLTGSRFTVMKGPLARLHRALSQFMLDVQTAEHGYTECYVPYIVNSDSLRGTGQLPKFEEDLFAARKGGQEGQAENAALYLIPTSEVPLTNFVRDEVVPEAQLPLKFTAHTPCFRSEAGSYGRDTRGMIRQHQFDKVEMVQVVHPEKSYEALEAMTGHAEVILQKLGLPYRVMLLCTGDMGFGATKTYDLEVWLPAQSTYREISSVSNCEAFQARRLQARFKNAQGKNEFVHTLNGSGLAVGRTLVAVLENYQRADGGVDIPAVLQPYMGGMTTLSLPAA.

248-250 (TSE) contributes to the L-serine binding site. 279–281 (RSE) is a binding site for ATP. An L-serine-binding site is contributed by Glu-302. 366 to 369 (EISS) serves as a coordination point for ATP. Ser-401 contacts L-serine.

The protein belongs to the class-II aminoacyl-tRNA synthetase family. Type-1 seryl-tRNA synthetase subfamily. In terms of assembly, homodimer. The tRNA molecule binds across the dimer.

It is found in the cytoplasm. The enzyme catalyses tRNA(Ser) + L-serine + ATP = L-seryl-tRNA(Ser) + AMP + diphosphate + H(+). It catalyses the reaction tRNA(Sec) + L-serine + ATP = L-seryl-tRNA(Sec) + AMP + diphosphate + H(+). The protein operates within aminoacyl-tRNA biosynthesis; selenocysteinyl-tRNA(Sec) biosynthesis; L-seryl-tRNA(Sec) from L-serine and tRNA(Sec): step 1/1. Catalyzes the attachment of serine to tRNA(Ser). Is also able to aminoacylate tRNA(Sec) with serine, to form the misacylated tRNA L-seryl-tRNA(Sec), which will be further converted into selenocysteinyl-tRNA(Sec). This Polaromonas naphthalenivorans (strain CJ2) protein is Serine--tRNA ligase.